A 478-amino-acid polypeptide reads, in one-letter code: Putative multidrug resistance outer membrane protein MdtQ (478 aa).

The signal sequence occupies residues 1–21; it reads MNRDSFYPAIACFPLLLMLAG. C22 carries the N-palmitoyl cysteine lipid modification. C22 is lipidated: S-diacylglycerol cysteine.

It belongs to the outer membrane factor (OMF) (TC 1.B.17) family.

The protein localises to the cell outer membrane. In terms of biological role, could be involved in resistance to puromycin, acriflavine and tetraphenylarsonium chloride. The protein is Putative multidrug resistance outer membrane protein MdtQ (mdtQ) of Shigella flexneri.